Here is a 425-residue protein sequence, read N- to C-terminus: Pleckstrin homology domain-containing family A member 2 (425 aa).

One can recognise a PH 1 domain in the interval 7-113 (QNRICGFLDI…WVEALNQASK (107 aa)). Residue Lys-141 forms a Glycyl lysine isopeptide (Lys-Gly) (interchain with G-Cter in SUMO2) linkage. A Phosphoserine modification is found at Ser-184. The 101-residue stretch at 198 to 298 (PLIKSGYCVK…WIEGIGAAVQ (101 aa)) folds into the PH 2 domain. Positions 310 to 331 (SRSISLTRPGSSTLTSAPNSIL) are enriched in polar residues. The tract at residues 310–425 (SRSISLTRPG…DDENIRTSDV (116 aa)) is disordered. Phosphoserine is present on residues Ser-314 and Ser-349. 2 stretches are compositionally biased toward basic and acidic residues: residues 363–375 (AEEK…HAPE) and 400–410 (RSEPQHPKEKP).

Binds MPDZ and PTPN13.

The protein resides in the cytoplasm. It is found in the cell membrane. Its subcellular location is the nucleus. Binds specifically to phosphatidylinositol 3,4-diphosphate (PtdIns3,4P2), but not to other phosphoinositides. May recruit other proteins to the plasma membrane. The polypeptide is Pleckstrin homology domain-containing family A member 2 (Plekha2) (Mus musculus (Mouse)).